The primary structure comprises 642 residues: Conserved oligomeric Golgi complex subunit 6 (642 aa).

The protein belongs to the COG6 family. Component of the conserved oligomeric Golgi complex which is composed of eight different subunits and is required for normal Golgi morphology and localization.

It localises to the golgi apparatus membrane. Its function is as follows. Required for normal Golgi function. The protein is Conserved oligomeric Golgi complex subunit 6 (cogc-6) of Caenorhabditis elegans.